The primary structure comprises 432 residues: Adenylosuccinate synthetase (432 aa).

GTP-binding positions include Gly-12–Lys-18 and Gly-40–Thr-42. Residue Asp-13 is the Proton acceptor of the active site. The Mg(2+) site is built by Asp-13 and Gly-40. Residues Asp-13–Lys-16, Asn-38–His-41, Thr-130, Arg-144, Gln-225, Thr-240, and Arg-304 each bind IMP. The Proton donor role is filled by His-41. Ser-300 to Arg-306 provides a ligand contact to substrate. Residues Arg-306, Lys-332 to Asp-334, and Ser-414 to Gly-416 contribute to the GTP site.

It belongs to the adenylosuccinate synthetase family. In terms of assembly, homodimer. It depends on Mg(2+) as a cofactor.

The protein resides in the cytoplasm. The catalysed reaction is IMP + L-aspartate + GTP = N(6)-(1,2-dicarboxyethyl)-AMP + GDP + phosphate + 2 H(+). It functions in the pathway purine metabolism; AMP biosynthesis via de novo pathway; AMP from IMP: step 1/2. Functionally, plays an important role in the de novo pathway of purine nucleotide biosynthesis. Catalyzes the first committed step in the biosynthesis of AMP from IMP. In Citrifermentans bemidjiense (strain ATCC BAA-1014 / DSM 16622 / JCM 12645 / Bem) (Geobacter bemidjiensis), this protein is Adenylosuccinate synthetase.